The following is a 524-amino-acid chain: Xanthotoxin 5-hydroxylase CYP82C4 (524 aa).

Residues M1–F21 traverse the membrane as a helical segment. C463 lines the heme pocket.

This sequence belongs to the cytochrome P450 family. Heme serves as cofactor. In terms of tissue distribution, expressed in both primary and lateral roots under iron-deficient conditions, except in apical root zones, and mostly in the root epidermal layer.

The protein localises to the membrane. It carries out the reaction fraxetin + reduced [NADPH--hemoprotein reductase] + O2 = sideretin (reduced form) + oxidized [NADPH--hemoprotein reductase] + H2O + H(+). It catalyses the reaction xanthotoxin + reduced [NADPH--hemoprotein reductase] + O2 = 5-hydroxyxanthotoxin + oxidized [NADPH--hemoprotein reductase] + H2O + 2 H(+). It functions in the pathway phenylpropanoid metabolism. In terms of biological role, can hydroxylate xanthotoxin (8-methoxypsoralen) to form 5-hydroxyxanthotoxin (5-hydroxy-8-methoxypsoralen) in vivo and in vitro. Involved in the early iron deficiency response, possibly through an IDE1-like mediated pathway. Involved in the pathway of sideretin biosynthesis from feruloyl CoA, a redox-active catecholic metabolite exuded by roots in response to iron deficiency in order to facilitate the uptake of iron; this pathway consists in the successive conversion from feruloyl CoA to scopoletin, from scopoletin to fraxetin and from fraxetin to sideretin. Catalyzes the biosynthesis of sideretin via fraxetin hydroxylation. The chain is Xanthotoxin 5-hydroxylase CYP82C4 from Arabidopsis thaliana (Mouse-ear cress).